Consider the following 530-residue polypeptide: Inactive ubiquitin carboxyl-terminal hydrolase 17-like protein 7 (530 aa).

The region spanning 80-375 is the USP domain; the sequence is AGLQKIGNTF…QAYVLFYIQK (296 aa). The span at 382-392 shows a compositional bias: basic and acidic residues; that stretch reads SESVSRGREPR. 3 disordered regions span residues 382–412, 431–454, and 490–530; these read SESV…KRDH, ESTL…NVRK, and SSTK…LVCQ. Positions 490–512 are enriched in polar residues; that stretch reads SSTKPTDQESMNTGTLASLQGST. Residues 513–524 are compositionally biased toward basic residues; the sequence is RRSKGNNKHSKR.

It belongs to the peptidase C19 family. USP17 subfamily.

It is found in the nucleus. It localises to the endoplasmic reticulum. This is Inactive ubiquitin carboxyl-terminal hydrolase 17-like protein 7 (USP17L7) from Homo sapiens (Human).